We begin with the raw amino-acid sequence, 287 residues long: Pyridoxal kinase PdxY (287 aa).

Residues Ser10 and 45–46 (TQ) each bind substrate. Residues Asp112, Ala144, Glu149, Lys182, and 209–212 (RPLV) contribute to the ATP site. Asp224 contributes to the substrate binding site.

The protein belongs to the pyridoxine kinase family. PdxY subfamily. As to quaternary structure, homodimer. Mg(2+) serves as cofactor.

It catalyses the reaction pyridoxal + ATP = pyridoxal 5'-phosphate + ADP + H(+). It participates in cofactor metabolism; pyridoxal 5'-phosphate salvage; pyridoxal 5'-phosphate from pyridoxal: step 1/1. Pyridoxal kinase involved in the salvage pathway of pyridoxal 5'-phosphate (PLP). Catalyzes the phosphorylation of pyridoxal to PLP. This is Pyridoxal kinase PdxY from Escherichia coli O157:H7.